A 575-amino-acid chain; its full sequence is Arginine--tRNA ligase (575 aa).

The 'HIGH' region motif lies at 122 to 132; sequence PNVAKEMHVGH.

It belongs to the class-I aminoacyl-tRNA synthetase family. Monomer.

The protein localises to the cytoplasm. It catalyses the reaction tRNA(Arg) + L-arginine + ATP = L-arginyl-tRNA(Arg) + AMP + diphosphate. The protein is Arginine--tRNA ligase of Actinobacillus succinogenes (strain ATCC 55618 / DSM 22257 / CCUG 43843 / 130Z).